Reading from the N-terminus, the 140-residue chain is uncharacterized protein (140 aa).

The HTH cro/C1-type domain maps to 26–80 (IRSQRETAHVSMRQLAERSGVSNPYLSQVERGLRKPSADVLSQIAKALRVSAEVL). Positions 37–56 (MRQLAERSGVSNPYLSQVER) form a DNA-binding region, H-T-H motif.

This is an uncharacterized protein from Mycobacterium tuberculosis (strain ATCC 25618 / H37Rv).